A 312-amino-acid polypeptide reads, in one-letter code: Aspartate carbamoyltransferase catalytic subunit (312 aa).

2 residues coordinate carbamoyl phosphate: arginine 58 and threonine 59. L-aspartate is bound at residue lysine 86. Residues arginine 108, histidine 136, and glutamine 139 each coordinate carbamoyl phosphate. 2 residues coordinate L-aspartate: arginine 169 and arginine 223. Residues glycine 264 and proline 265 each coordinate carbamoyl phosphate.

Belongs to the aspartate/ornithine carbamoyltransferase superfamily. ATCase family. As to quaternary structure, heterododecamer (2C3:3R2) of six catalytic PyrB chains organized as two trimers (C3), and six regulatory PyrI chains organized as three dimers (R2).

The catalysed reaction is carbamoyl phosphate + L-aspartate = N-carbamoyl-L-aspartate + phosphate + H(+). The protein operates within pyrimidine metabolism; UMP biosynthesis via de novo pathway; (S)-dihydroorotate from bicarbonate: step 2/3. In terms of biological role, catalyzes the condensation of carbamoyl phosphate and aspartate to form carbamoyl aspartate and inorganic phosphate, the committed step in the de novo pyrimidine nucleotide biosynthesis pathway. The sequence is that of Aspartate carbamoyltransferase catalytic subunit from Heliobacterium modesticaldum (strain ATCC 51547 / Ice1).